Consider the following 396-residue polypeptide: Enoyl-[acyl-carrier-protein] reductase [NADH] (396 aa).

Residues 48–53, 74–75, 111–112, and 139–140 each bind NAD(+); these read GASTGY, FE, DA, and LA. A substrate-binding site is contributed by Y225. The active-site Proton donor is the Y235. NAD(+)-binding positions include K244 and 273–275; that span reads VVT.

The protein belongs to the TER reductase family. Monomer.

The enzyme catalyses a 2,3-saturated acyl-[ACP] + NAD(+) = a (2E)-enoyl-[ACP] + NADH + H(+). It functions in the pathway lipid metabolism; fatty acid biosynthesis. Involved in the final reduction of the elongation cycle of fatty acid synthesis (FAS II). Catalyzes the reduction of a carbon-carbon double bond in an enoyl moiety that is covalently linked to an acyl carrier protein (ACP). The sequence is that of Enoyl-[acyl-carrier-protein] reductase [NADH] from Colwellia psychrerythraea (strain 34H / ATCC BAA-681) (Vibrio psychroerythus).